Here is an 815-residue protein sequence, read N- to C-terminus: Probable tape measure protein (815 aa).

The stretch at 67-163 (HALEKARQEA…NRQRDALVRV (97 aa)) forms a coiled coil.

This sequence belongs to the P2likevirus tape measure protein family.

Serves as a base for tail tube protein polymerization and acts as a template for tail length determination. The chain is Probable tape measure protein from Escherichia phage P2 (Bacteriophage P2).